We begin with the raw amino-acid sequence, 198 residues long: Pyridoxal 5'-phosphate synthase subunit PdxT (198 aa).

Residue 52 to 54 (GES) coordinates L-glutamine. The active-site Nucleophile is C84. Residues R116 and 143–144 (IR) each bind L-glutamine. Catalysis depends on charge relay system residues H179 and E181.

The protein belongs to the glutaminase PdxT/SNO family. In terms of assembly, in the presence of PdxS, forms a dodecamer of heterodimers. Only shows activity in the heterodimer.

It catalyses the reaction aldehydo-D-ribose 5-phosphate + D-glyceraldehyde 3-phosphate + L-glutamine = pyridoxal 5'-phosphate + L-glutamate + phosphate + 3 H2O + H(+). The catalysed reaction is L-glutamine + H2O = L-glutamate + NH4(+). The protein operates within cofactor biosynthesis; pyridoxal 5'-phosphate biosynthesis. In terms of biological role, catalyzes the hydrolysis of glutamine to glutamate and ammonia as part of the biosynthesis of pyridoxal 5'-phosphate. The resulting ammonia molecule is channeled to the active site of PdxS. This chain is Pyridoxal 5'-phosphate synthase subunit PdxT, found in Caldivirga maquilingensis (strain ATCC 700844 / DSM 13496 / JCM 10307 / IC-167).